Consider the following 373-residue polypeptide: Bifunctional enzyme IspD/IspF (373 aa).

A 2-C-methyl-D-erythritol 4-phosphate cytidylyltransferase region spans residues 1 to 212; the sequence is MPDITLILLG…PCIEAPSGKT (212 aa). Residues 213 to 373 are 2-C-methyl-D-erythritol 2,4-cyclodiphosphate synthase; that stretch reads LTGFGLDIHP…NLTYYNWKQK (161 aa). The a divalent metal cation site is built by Asp-219 and His-221. 4-CDP-2-C-methyl-D-erythritol 2-phosphate contacts are provided by residues 219–221 and 245–246; these read DIH and HS. His-253 serves as a coordination point for a divalent metal cation. Residues 267–269, 272–276, 343–346, Phe-350, and Arg-353 contribute to the 4-CDP-2-C-methyl-D-erythritol 2-phosphate site; these read DIG, YPDTD, and TTAE.

This sequence in the N-terminal section; belongs to the IspD/TarI cytidylyltransferase family. IspD subfamily. It in the C-terminal section; belongs to the IspF family. The cofactor is a divalent metal cation.

It carries out the reaction 2-C-methyl-D-erythritol 4-phosphate + CTP + H(+) = 4-CDP-2-C-methyl-D-erythritol + diphosphate. The catalysed reaction is 4-CDP-2-C-methyl-D-erythritol 2-phosphate = 2-C-methyl-D-erythritol 2,4-cyclic diphosphate + CMP. It functions in the pathway isoprenoid biosynthesis; isopentenyl diphosphate biosynthesis via DXP pathway; isopentenyl diphosphate from 1-deoxy-D-xylulose 5-phosphate: step 2/6. Its pathway is isoprenoid biosynthesis; isopentenyl diphosphate biosynthesis via DXP pathway; isopentenyl diphosphate from 1-deoxy-D-xylulose 5-phosphate: step 4/6. Functionally, bifunctional enzyme that catalyzes the formation of 4-diphosphocytidyl-2-C-methyl-D-erythritol from CTP and 2-C-methyl-D-erythritol 4-phosphate (MEP) (IspD), and catalyzes the conversion of 4-diphosphocytidyl-2-C-methyl-D-erythritol 2-phosphate (CDP-ME2P) to 2-C-methyl-D-erythritol 2,4-cyclodiphosphate (ME-CPP) with a corresponding release of cytidine 5-monophosphate (CMP) (IspF). This Sulfurovum sp. (strain NBC37-1) protein is Bifunctional enzyme IspD/IspF.